The following is a 223-amino-acid chain: Capsid protein (223 aa).

A compositionally biased stretch (basic and acidic residues) spans 1 to 19 (MDDETKKLKNKNKETKEGD). The tract at residues 1–21 (MDDETKKLKNKNKETKEGDDV) is disordered.

Belongs to the closteroviridae capsid protein family. Consists of at least two size variants, CP1 and CP2, which result of post-translational proteolysis at sites approximately 12 to 15 and 26 AA from the N-terminus respectively.

It localises to the virion. This chain is Capsid protein, found in Citrus tristeza virus (isolate T36) (CTV).